The primary structure comprises 164 residues: Phosphopantetheine adenylyltransferase (164 aa).

Substrate is bound at residue Ser10. ATP is bound by residues 10-11 (SF) and His18. Residues Lys42, Met74, and Arg88 each coordinate substrate. Residues 89–91 (GLR), Glu99, and 124–130 (YFFVSAR) each bind ATP.

It belongs to the bacterial CoaD family. In terms of assembly, homohexamer. Mg(2+) serves as cofactor.

The protein localises to the cytoplasm. It catalyses the reaction (R)-4'-phosphopantetheine + ATP + H(+) = 3'-dephospho-CoA + diphosphate. It participates in cofactor biosynthesis; coenzyme A biosynthesis; CoA from (R)-pantothenate: step 4/5. In terms of biological role, reversibly transfers an adenylyl group from ATP to 4'-phosphopantetheine, yielding dephospho-CoA (dPCoA) and pyrophosphate. The chain is Phosphopantetheine adenylyltransferase from Anaeromyxobacter dehalogenans (strain 2CP-1 / ATCC BAA-258).